Consider the following 271-residue polypeptide: 5-deoxy-glucuronate isomerase (271 aa).

This sequence belongs to the isomerase IolB family.

It catalyses the reaction 5-deoxy-D-glucuronate = 5-dehydro-2-deoxy-D-gluconate. Its pathway is polyol metabolism; myo-inositol degradation into acetyl-CoA; acetyl-CoA from myo-inositol: step 4/7. In terms of biological role, involved in the isomerization of 5-deoxy-glucuronate (5DG) to 5-dehydro-2-deoxy-D-gluconate (DKG or 2-deoxy-5-keto-D-gluconate). In Bacillus velezensis (strain DSM 23117 / BGSC 10A6 / LMG 26770 / FZB42) (Bacillus amyloliquefaciens subsp. plantarum), this protein is 5-deoxy-glucuronate isomerase.